We begin with the raw amino-acid sequence, 1497 residues long: MRSKHVLYIAILFSSIFGGKGIQQNEEFQRYDGWYNNLANSEWGSAGSRLHRDARSYYSDGVYSVNNSLPSARELSDILFKGESGIPNTRGCTTLLAFFSQVVAYEIMQSNGVSCPLETLKIQVPLCDNVFDKECEGKTEIPFTRAKYDKATGNGLNSPREQINERTSWIDGSFIYGTTQPWVSSLRSFKQGRLAEGVPGYPPLNNPHIPLNNPAPPQVHRLMSPDRLFMLGDSRVNENPGLLSFGLILFRWHNYNANQIHREHPDWTDEQIFQAARRLVIASMQKIIAYDFVPGLLGEDVRLSNYTKYMPHVPPGISHAFGAAAFRFPHSIVPPAMLLRKRGNKCEFRTEVGGYPALRLCQNWWNAQDIVKEYSVDEIILGMASQIAERDDNIVVEDLRDYIFGPMHFSRLDVVASSIMRGRDNGVPPYNELRRTFGLAPKTWETMNEDFYKKHTAKVEKLKELYGGNILYLDAYVGGMLEGGENGPGELFKEIIKDQFTRIRDGDRFWFENKLNGLFTDEEVQMIHSITLRDIIKATTDIDETMLQKDVFFFKEGDPCPQPFQVNTTGLEPCVPFMQSTYWTDNDTTYVFTLIGLACVPLICYGIGRYLVNRRIAIGHNSACDSLTTDFANDDCGAKGDIYGVNALEWLQEEYIRQVRIEIENTTLAVKKPRGGILRKIRFETGQKIELFHSMPNPSAMHGPFVLLSQKNNHHLVIRLSSDRDLSKFLDQIRQAASGINAEVIIKDEENSILLSQAITKERRQDRLDLFFREAYAKAFNDSELQDSETSFDSSNDDILNETISREELASAMGMKANNEFVKRMFAMTAKHNEDSLSFNEFLTVLREFVNAPQKQKLQTLFKMCDLEGKNKVLRKDLAELVKSLNQTAGVHITESVQLRLFNEVLHYAGVSNDAKYLTYDDFNALFSDIPDKQPVGLPFNRKNYQPSIGETSSLNSFAVVDRSINSSAPLTLIHKVSAFLETYRQHVFIVFCFVAINLVLFFERFWHYRYMAENRDLRRVMGAGIAITRGAAGALSFCMALILLTVCRNIITLLRETVIAQYIPFDSAIAFHKIVALFAAFWATLHTVGHCVNFYHVGTQSQEGLACLFQEAFFGSNFLPSISYWFFSTITGLTGIALVAVMCIIYVFALPCFIKRAYHAFRLTHLLNIAFYALTLLHGLPKLLDSPKFGYYVVGPIVLFVIDRIIGLMQYYKKLEIVNAEILPSDIIYIEYRRPREFKYKSGQWVTVSSPSISCTFNESHAFSIASSPQDENMKLYIKAVGPWTWKLRSELIRSLNTGSPFPLIHMKGPYGDGNQEWMDYEVAIMVGAGIGVTPYASTLVDLVQRTSSDSFHRVRCRKVYFLWVCSTHKNYEWFVDVLKNVEDQARSGILETHIFVTQTFHKFDLRTTMLYICEKHFRATNSGISMFTGLHAKNHFGRPNFKAFFQFIQSEHKEQSKIGVFSCGPVNLNESIAEGCADANRQRDAPSFAHRFETF.

The signal sequence occupies residues 1 to 21; sequence MRSKHVLYIAILFSSIFGGKG. At 22-587 the chain is on the extracellular side; that stretch reads IQQNEEFQRY…MQSTYWTDND (566 aa). The segment at 26 to 590 is peroxidase-like; mediates peroxidase activity; that stretch reads EEFQRYDGWY…TYWTDNDTTY (565 aa). 4 N-linked (GlcNAc...) asparagine glycosylation sites follow: N66, N305, N567, and N586. A helical transmembrane segment spans residues 588–608; it reads TTYVFTLIGLACVPLICYGIG. Over 609–986 the chain is Cytoplasmic; that stretch reads RYLVNRRIAI…VSAFLETYRQ (378 aa). 2 consecutive EF-hand domains span residues 817–852 and 853–888; these read ANNE…FVNA and PQKQ…LNQT. Residues 987–1007 form a helical membrane-spanning segment; it reads HVFIVFCFVAINLVLFFERFW. The Extracellular segment spans residues 1008–1024; the sequence is HYRYMAENRDLRRVMGA. A helical transmembrane segment spans residues 1025 to 1045; sequence GIAITRGAAGALSFCMALILL. The Ferric oxidoreductase domain maps to 1030 to 1210; that stretch reads RGAAGALSFC…FVIDRIIGLM (181 aa). Over 1046–1068 the chain is Cytoplasmic; sequence TVCRNIITLLRETVIAQYIPFDS. A helical membrane pass occupies residues 1069-1089; it reads AIAFHKIVALFAAFWATLHTV. Over 1090-1134 the chain is Extracellular; it reads GHCVNFYHVGTQSQEGLACLFQEAFFGSNFLPSISYWFFSTITGL. The chain crosses the membrane as a helical span at residues 1135-1155; it reads TGIALVAVMCIIYVFALPCFI. The Cytoplasmic portion of the chain corresponds to 1156–1163; sequence KRAYHAFR. A helical transmembrane segment spans residues 1164-1184; it reads LTHLLNIAFYALTLLHGLPKL. At 1185–1189 the chain is on the extracellular side; it reads LDSPK. The chain crosses the membrane as a helical span at residues 1190–1210; the sequence is FGYYVVGPIVLFVIDRIIGLM. One can recognise an FAD-binding FR-type domain in the interval 1211–1318; that stretch reads QYYKKLEIVN…KGPYGDGNQE (108 aa). At 1211 to 1497 the chain is on the cytoplasmic side; the sequence is QYYKKLEIVN…PSFAHRFETF (287 aa).

This sequence in the N-terminal section; belongs to the peroxidase family. In terms of assembly, interacts with doxa-1 and tsp-15. Interacts with rho-1. In terms of tissue distribution, expressed in hypodermal cells.

The protein resides in the membrane. The catalysed reaction is NADH + O2 + H(+) = H2O2 + NAD(+). It carries out the reaction NADPH + O2 + H(+) = H2O2 + NADP(+). With respect to regulation, peroxidase activity is inhibited by aminobenzohydrazide. Functionally, plays a role in cuticle biogenesis. In complex with doxa-1 and tsp-15, produces reactive oxygen species (ROS), which are probably used by mlt-7 for tyrosine cross-linking, thus stabilizing cuticular extracellular matrix. May regulate the production of ROS by playing a role in modulating proline catabolism. Required in combination with mlt-7 for correct formation of cross-links in cuticle collagens. Association with the GTPase rho-1 promotes ROS production and this interaction may be modulated by memo-1, in order to control the oxidative stress response and longevity. This Caenorhabditis elegans protein is Dual oxidase 1.